The primary structure comprises 302 residues: Nucleotide-binding protein SERP0433 (302 aa).

18-25 (GMSGAGKS) provides a ligand contact to ATP. 69–72 (DLRG) is a GTP binding site.

This sequence belongs to the RapZ-like family.

In terms of biological role, displays ATPase and GTPase activities. This chain is Nucleotide-binding protein SERP0433, found in Staphylococcus epidermidis (strain ATCC 35984 / DSM 28319 / BCRC 17069 / CCUG 31568 / BM 3577 / RP62A).